Consider the following 496-residue polypeptide: Gamma-aminobutyric acid receptor subunit beta-like (496 aa).

The segment at residues 1–20 (MTCFTRVGVSCGLFFFLLGA) is a signal peptide (or 27). At 21-258 (QLQLIRCIRK…SFKLQRNIGY (238 aa)) the chain is on the extracellular side. 2 N-linked (GlcNAc...) asparagine glycosylation sites follow: asparagine 39 and asparagine 189. Cysteines 176 and 190 form a disulfide. The next 3 helical transmembrane spans lie at 259 to 280 (FVFQ…SFWI), 285 to 306 (TSAR…STGV), and 318 to 342 (AIDI…AVNY). The Cytoplasmic segment spans residues 343-472 (TYWGKRAKKK…KIKDVNIIDK (130 aa)). A helical membrane pass occupies residues 473–494 (YSRMIFPISFLAFNLGYWLFYI).

This sequence belongs to the ligand-gated ion channel (TC 1.A.9) family. Gamma-aminobutyric acid receptor (TC 1.A.9.5) subfamily. Generally pentameric. There are five types of GABA(A) receptor chains: alpha, beta, gamma, delta, and rho. Interacts with Grd (alpha chain).

The protein localises to the postsynaptic cell membrane. The protein resides in the cell membrane. Functionally, GABA, an inhibitory neurotransmitter, mediates neuronal inhibition by binding to the GABA receptor and opening an integral chloride channel. Combines with the ligand-gated ion channel subunit GRD to form cation-selective GABA-gated ion channels when coexpressed in Xenopus laevis oocytes. This is Gamma-aminobutyric acid receptor subunit beta-like (Lcch3) from Drosophila melanogaster (Fruit fly).